The sequence spans 73 residues: Neurotoxin Cex13 (73 aa).

Residues 1–7 (ATGNVWA) form the signal peptide. Positions 8-71 (KDGYLVIIKT…TWPLPDKTCG (64 aa)) constitute an LCN-type CS-alpha/beta domain. Disulfide bonds link C19–C70, C23–C46, C32–C51, and C36–C53. C70 is subject to Cysteine amide. Residues 71–73 (GTK) constitute a propeptide that is removed on maturation.

Belongs to the long (4 C-C) scorpion toxin superfamily. Sodium channel inhibitor family. Beta subfamily. In terms of tissue distribution, expressed by the venom gland.

It is found in the secreted. In terms of biological role, beta toxins bind voltage-independently at site-4 of sodium channels (Nav) and shift the voltage of activation toward more negative potentials thereby affecting sodium channel activation and promoting spontaneous and repetitive firing. The polypeptide is Neurotoxin Cex13 (Centruroides exilicauda (Bark scorpion)).